Consider the following 333-residue polypeptide: L-lactate dehydrogenase B chain (333 aa).

Residues 29–57 (GQVGMACAISILGKGLCDELALVDVLEDK) and R99 contribute to the NAD(+) site. Residues R106, N138, and R169 each coordinate substrate. N138 lines the NAD(+) pocket. Residue H193 is the Proton acceptor of the active site. T248 serves as a coordination point for substrate.

This sequence belongs to the LDH/MDH superfamily. LDH family. As to quaternary structure, homotetramer.

It is found in the cytoplasm. It carries out the reaction (S)-lactate + NAD(+) = pyruvate + NADH + H(+). It functions in the pathway fermentation; pyruvate fermentation to lactate; (S)-lactate from pyruvate: step 1/1. In terms of biological role, interconverts simultaneously and stereospecifically pyruvate and lactate with concomitant interconversion of NADH and NAD(+). The sequence is that of L-lactate dehydrogenase B chain (LDHB) from Pelodiscus sinensis japonicus (Chinese soft-shelled turtle).